Reading from the N-terminus, the 379-residue chain is MSSRAETPRVPFLDLKAAYEELRAETDAAIARVLDSGRYLLGPELEGFEAEFAAYCETDHAVGVNSGMDALQLALRGLGIGPGDEVIVPSHTYIASWLAVSATGATPVPVEPHEDHPTLDPLLVEKAITPRTRALLPVHLYGHPADMDALRELADRHGLHIVEDAAQAHGARYRGRRIGAGSSVAAFSFYPGKNLGCFGDGGAVVTGDPELAERLRMLRNYGSRQKYSHETKGTNSRLDEMQAAVLRIRLAHLDSWNGRRSALAAEYLSGLAGLPGIGLPVTAPDTDPVWHLFTVRTERRDELRSHLDARGIDTLTHYPVPVHLSPAYAGEAPPEGSLPRAESFARQVLSLPIGPHLERPQALRVIDAVREWAERVDQA.

Pyridoxal 5'-phosphate is bound by residues glycine 67, glutamine 167, 188-193, tyrosine 221, tyrosine 227, 235-237, and tyrosine 318; these read SFYPGK and NSR. Residue lysine 193 is modified to N6-(pyridoxal phosphate)lysine.

This sequence belongs to the degT/dnrJ/eryC1 family. Homodimer. Pyridoxal 5'-phosphate is required as a cofactor.

It catalyses the reaction dTDP-3-amino-3,4,6-trideoxy-alpha-D-glucose + 2-oxoglutarate = dTDP-3-dehydro-4,6-dideoxy-alpha-D-glucose + L-glutamate. It participates in antibiotic biosynthesis. Involved in the biosynthesis of dTDP-alpha-D-desosamine, a sugar found in several bacterial macrolide antibiotics. Catalyzes the reversible transfer of the amino group from L-glutamate to the C-3 position of dTDP-3-keto-4,6-deoxyglucose to yield dTDP-3-amino-3,4,6-trideoxyglucose. The protein is dTDP-3-amino-3,4,6-trideoxy-alpha-D-glucose transaminase of Streptomyces venezuelae.